A 213-amino-acid polypeptide reads, in one-letter code: Large ribosomal subunit protein uL1 (213 aa).

Belongs to the universal ribosomal protein uL1 family. Part of the 50S ribosomal subunit.

Binds directly to 23S rRNA. Probably involved in E site tRNA release. Its function is as follows. Protein L1 is also a translational repressor protein, it controls the translation of its operon by binding to its mRNA. This Methanocorpusculum labreanum (strain ATCC 43576 / DSM 4855 / Z) protein is Large ribosomal subunit protein uL1.